The sequence spans 688 residues: PR domain zinc finger protein 8 (688 aa).

The region spanning 16–131 (KAVQQCLTDI…KDEELLVWYG (116 aa)) is the SET domain. An S-adenosyl-L-methionine-binding site is contributed by Y130. The C2H2-type 1 zinc finger occupies 154 to 182 (YTCLECSQRFQFEFPYVAHLRFRCPKRLH). Disordered regions lie at residues 184-309 (TDAN…GCKG) and 397-506 (EEAA…PARS). The segment covering 192 to 208 (QGGGLGTKDHGGGGGGK) has biased composition (gly residues). 2 stretches are compositionally biased toward low complexity: residues 209–219 (EQQQQQQQQQQ) and 275–284 (GSSSCVAAPG). Gly residues-rich tracts occupy residues 414-424 (AGGGVAGGGSN) and 470-489 (LGGG…GGGQ). 2 consecutive C2H2-type zinc fingers follow at residues 624–647 (NWCA…RSHH) and 665–687 (LKCP…MTSH).

It belongs to the class V-like SAM-binding methyltransferase superfamily. As to quaternary structure, interacts with BHLHE22. Interacts with EPM2A and NHLRC1. This interaction sequesters EPM2A and NHLRC1 to the nucleus. As to expression, expressed in brain, heart, liver, testes, retina. Highest expression is observed in the retina and hippocampus; moderately expressed in the cortex and cerebellum. In the retina, it is expressed in bipolar and amacrine cells.

The protein resides in the nucleus. Its function is as follows. Probable histone methyltransferase, preferentially acting on 'Lys-9' of histone H3. Histone methyltransferase activity has not been confirmed in other species. Involved in the control of steroidogenesis through transcriptional repression of steroidogenesis marker genes such as CYP17A1 and LHCGR. Forms with BHLHE22 a transcriptional repressor complex controlling genes involved in neural development and neuronal differentiation. In the retina, it is required for rod bipolar and type 2 OFF-cone bipolar cell survival. In Mus musculus (Mouse), this protein is PR domain zinc finger protein 8 (Prdm8).